Reading from the N-terminus, the 220-residue chain is Exodeoxyribonuclease 10 (220 aa).

It depends on Mg(2+) as a cofactor.

Its function is as follows. Capable of degrading both single-strand and double-strand DNA with 3' to 5' polarity. Has higher affinity for ssDNA ends than for dsDNA. This is Exodeoxyribonuclease 10 (exoX) from Escherichia coli O6:H1 (strain CFT073 / ATCC 700928 / UPEC).